Reading from the N-terminus, the 233-residue chain is 7-cyano-7-deazaguanine synthase (233 aa).

8-18 is an ATP binding site; that stretch reads FSGGQDSTTCL. Zn(2+) contacts are provided by Cys188, Cys197, Cys200, and Cys203.

The protein belongs to the QueC family. It depends on Zn(2+) as a cofactor.

The catalysed reaction is 7-carboxy-7-deazaguanine + NH4(+) + ATP = 7-cyano-7-deazaguanine + ADP + phosphate + H2O + H(+). Its pathway is purine metabolism; 7-cyano-7-deazaguanine biosynthesis. In terms of biological role, catalyzes the ATP-dependent conversion of 7-carboxy-7-deazaguanine (CDG) to 7-cyano-7-deazaguanine (preQ(0)). This chain is 7-cyano-7-deazaguanine synthase, found in Klebsiella pneumoniae (strain 342).